The chain runs to 653 residues: Extracellular metalloproteinase (653 aa).

The signal sequence occupies residues 1–19; it reads MRSFLLASLASLSVISVYG. A propeptide spanning residues 20 to 244 is cleaved from the precursor; the sequence is HPHARSTLTR…VHAVVDYSAD (225 aa). N-linked (GlcNAc...) asparagine glycosylation is found at asparagine 327, asparagine 336, and asparagine 412. Histidine 429 serves as a coordination point for Zn(2+). Residue glutamate 430 is part of the active site. Histidine 433 provides a ligand contact to Zn(2+). 2 N-linked (GlcNAc...) asparagine glycosylation sites follow: asparagine 636 and asparagine 637.

It belongs to the peptidase M36 family. Zn(2+) is required as a cofactor.

It is found in the secreted. In terms of biological role, secreted metalloproteinase that allows assimilation of proteinaceous substrates. This chain is Extracellular metalloproteinase (MEP), found in Pyrenophora tritici-repentis (strain Pt-1C-BFP) (Wheat tan spot fungus).